Here is a 293-residue protein sequence, read N- to C-terminus: D-alanine--D-alanine ligase (293 aa).

Positions 98–291 (KIIWKQHNLT…FNKLVVAIIN (194 aa)) constitute an ATP-grasp domain. Residue 124–177 (DFPLPWMVKPTLEGSSIGISKVDSQIQLNNALMLAWQYNSHALIEQWIEGDEYT) participates in ATP binding. Asp-245, Glu-258, and Asn-260 together coordinate Mg(2+).

It belongs to the D-alanine--D-alanine ligase family. Mg(2+) is required as a cofactor. It depends on Mn(2+) as a cofactor.

The protein resides in the cytoplasm. It catalyses the reaction 2 D-alanine + ATP = D-alanyl-D-alanine + ADP + phosphate + H(+). It functions in the pathway cell wall biogenesis; peptidoglycan biosynthesis. Cell wall formation. In Ruthia magnifica subsp. Calyptogena magnifica, this protein is D-alanine--D-alanine ligase.